Reading from the N-terminus, the 322-residue chain is Probable transcription factor KAN3 (322 aa).

The segment at 1–35 (MELFPSQPDLYLKISRRREEEQEKESQELQEQEVE) is disordered. Positions 17-35 (RREEEQEKESQELQEQEVE) are enriched in basic and acidic residues. In terms of domain architecture, HTH myb-type spans 161–221 (GVRAPRMRWT…HLQMYRTIKS (61 aa)). The segment at residues 192–217 (PKSVLELMDVQDLTLAHVKSHLQMYR) is a DNA-binding region (H-T-H motif). Disordered stretches follow at residues 222-244 (TEKPTTSSGQSDCENGSQVNSER) and 267-322 (KASS…NLSP). Polar residues-rich tracts occupy residues 224–241 (KPTTSSGQSDCENGSQVN) and 299–322 (LTGTRPETETPNLDFTLATPNLSP).

In terms of tissue distribution, expressed in developing phloem.

The protein localises to the nucleus. Functionally, probable transcription factor that regulates lateral organ polarity. Plays a role in lateral root formation and development. This Arabidopsis thaliana (Mouse-ear cress) protein is Probable transcription factor KAN3 (KAN3).